We begin with the raw amino-acid sequence, 106 residues long: Urease subunit beta (106 aa).

It belongs to the urease beta subunit family. As to quaternary structure, heterotrimer of UreA (gamma), UreB (beta) and UreC (alpha) subunits. Three heterotrimers associate to form the active enzyme.

The protein localises to the cytoplasm. It carries out the reaction urea + 2 H2O + H(+) = hydrogencarbonate + 2 NH4(+). Its pathway is nitrogen metabolism; urea degradation; CO(2) and NH(3) from urea (urease route): step 1/1. This chain is Urease subunit beta, found in Acinetobacter baumannii (strain SDF).